The following is a 290-amino-acid chain: 33 kDa chaperonin (290 aa).

2 disulfides stabilise this stretch: Cys235–Cys237 and Cys268–Cys271.

The protein belongs to the HSP33 family. Under oxidizing conditions two disulfide bonds are formed involving the reactive cysteines. Under reducing conditions zinc is bound to the reactive cysteines and the protein is inactive.

It is found in the cytoplasm. In terms of biological role, redox regulated molecular chaperone. Protects both thermally unfolding and oxidatively damaged proteins from irreversible aggregation. Plays an important role in the bacterial defense system toward oxidative stress. The polypeptide is 33 kDa chaperonin (Streptococcus pyogenes serotype M5 (strain Manfredo)).